Here is a 130-residue protein sequence, read N- to C-terminus: Small ribosomal subunit protein uS8 (130 aa).

The protein belongs to the universal ribosomal protein uS8 family. As to quaternary structure, part of the 30S ribosomal subunit. Contacts proteins S5 and S12.

Functionally, one of the primary rRNA binding proteins, it binds directly to 16S rRNA central domain where it helps coordinate assembly of the platform of the 30S subunit. The sequence is that of Small ribosomal subunit protein uS8 from Glaesserella parasuis serovar 5 (strain SH0165) (Haemophilus parasuis).